The sequence spans 429 residues: Phosphoribosylamine--glycine ligase (429 aa).

In terms of domain architecture, ATP-grasp spans 109-316; that stretch reads KDFLARHQIP…LVELCLAAID (208 aa). Residue 135-196 coordinates ATP; sequence VREQGAPIVV…EEFLDGEEAS (62 aa). Residues 212–234 are disordered; the sequence is SQDHKRVGDKDTGPNTGGMGAYS. A compositionally biased stretch (basic and acidic residues) spans 213–223; sequence QDHKRVGDKDT. Glu286 and Asn288 together coordinate Mg(2+).

Belongs to the GARS family. Mg(2+) is required as a cofactor. Requires Mn(2+) as cofactor.

It carries out the reaction 5-phospho-beta-D-ribosylamine + glycine + ATP = N(1)-(5-phospho-beta-D-ribosyl)glycinamide + ADP + phosphate + H(+). The protein operates within purine metabolism; IMP biosynthesis via de novo pathway; N(1)-(5-phospho-D-ribosyl)glycinamide from 5-phospho-alpha-D-ribose 1-diphosphate: step 2/2. The polypeptide is Phosphoribosylamine--glycine ligase (Vibrio vulnificus (strain YJ016)).